We begin with the raw amino-acid sequence, 122 residues long: UPF0102 protein Dred_2035 (122 aa).

It belongs to the UPF0102 family.

This is UPF0102 protein Dred_2035 from Desulforamulus reducens (strain ATCC BAA-1160 / DSM 100696 / MI-1) (Desulfotomaculum reducens).